We begin with the raw amino-acid sequence, 104 residues long: Phosphoribosyl-ATP pyrophosphatase (104 aa).

The protein belongs to the PRA-PH family.

The protein localises to the cytoplasm. The catalysed reaction is 1-(5-phospho-beta-D-ribosyl)-ATP + H2O = 1-(5-phospho-beta-D-ribosyl)-5'-AMP + diphosphate + H(+). It participates in amino-acid biosynthesis; L-histidine biosynthesis; L-histidine from 5-phospho-alpha-D-ribose 1-diphosphate: step 2/9. This chain is Phosphoribosyl-ATP pyrophosphatase, found in Methanosarcina barkeri (strain Fusaro / DSM 804).